The chain runs to 384 residues: Soluble hydrogenase, small subunit (384 aa).

Residue lysine 194 is modified to N6-(pyridoxal phosphate)lysine.

This sequence belongs to the class-V pyridoxal-phosphate-dependent aminotransferase family. Heterodimer of a large and a small subunit. Requires pyridoxal 5'-phosphate as cofactor.

The protein resides in the cytoplasm. In terms of biological role, soluble hydrogenase catalyzes both production and consumption of hydrogen from suitable artificial electron donors or acceptors. This subunit catalyzes the tritium-exchange activity. The polypeptide is Soluble hydrogenase, small subunit (Synechococcus sp. (strain PCC 6716)).